A 212-amino-acid polypeptide reads, in one-letter code: Probable GH family 25 lysozyme 2 (212 aa).

The signal sequence occupies residues 1–19 (MRFIALLISFFALLKVISA). In terms of domain architecture, Ch-type lysozyme spans 20–212 (ISGVDISSAS…GLGFDLNWYP (193 aa)). Residues D24, D112, and E114 contribute to the active site.

The protein belongs to the glycosyl hydrolase 25 family.

It is found in the secreted. The catalysed reaction is Hydrolysis of (1-&gt;4)-beta-linkages between N-acetylmuramic acid and N-acetyl-D-glucosamine residues in a peptidoglycan and between N-acetyl-D-glucosamine residues in chitodextrins.. This chain is Probable GH family 25 lysozyme 2, found in Dictyostelium discoideum (Social amoeba).